A 460-amino-acid chain; its full sequence is Serine/threonine-protein kinase cds1 (460 aa).

Residues 60–116 (WRFGRHKSCEVVLNGPRVSNFHFEIYQGHRNDSDESENVVFLHDHSSNGTFLNFERL) enclose the FHA domain. The region spanning 167 to 433 (YEIIRTLGSG…ESEALQHPWF (267 aa)) is the Protein kinase domain. Residues 173-181 (LGSGTFAVV) and Lys-196 contribute to the ATP site. Asp-294 serves as the catalytic Proton acceptor. A compositionally biased stretch (basic and acidic residues) spans 438 to 453 (THEHRTPPSSSEHEAT). A disordered region spans residues 438–460 (THEHRTPPSSSEHEATEQLNSSS). Thr-443 carries the phosphothreonine modification.

This sequence belongs to the protein kinase superfamily. CAMK Ser/Thr protein kinase family. CHEK2 subfamily. As to quaternary structure, interacts with rad26. Autophosphorylated.

It carries out the reaction L-seryl-[protein] + ATP = O-phospho-L-seryl-[protein] + ADP + H(+). The catalysed reaction is L-threonyl-[protein] + ATP = O-phospho-L-threonyl-[protein] + ADP + H(+). Functionally, has a role in the DNA replication-monitoring S/G2 checkpoint system. It is responsible for blocking mitosis in the S phase. It monitors DNA synthesis by interacting with DNA polymerase alpha and sends a signal to block the onset of mitosis while DNA synthesis is in progress. Phosphorylates rad60 and dna2. This Schizosaccharomyces pombe (strain 972 / ATCC 24843) (Fission yeast) protein is Serine/threonine-protein kinase cds1 (cds1).